A 193-amino-acid chain; its full sequence is 3-isopropylmalate dehydratase small subunit (193 aa).

The protein belongs to the LeuD family. LeuD type 1 subfamily. Heterodimer of LeuC and LeuD.

The catalysed reaction is (2R,3S)-3-isopropylmalate = (2S)-2-isopropylmalate. Its pathway is amino-acid biosynthesis; L-leucine biosynthesis; L-leucine from 3-methyl-2-oxobutanoate: step 2/4. Its function is as follows. Catalyzes the isomerization between 2-isopropylmalate and 3-isopropylmalate, via the formation of 2-isopropylmaleate. This Bacillus cereus (strain 03BB102) protein is 3-isopropylmalate dehydratase small subunit.